Consider the following 203-residue polypeptide: Microtubule-associated protein Jupiter (203 aa).

Phosphoserine is present on serine 30. A phosphothreonine mark is found at threonine 41 and threonine 102. The span at 123–132 (LISKGNYNGK) shows a compositional bias: polar residues. Disordered regions lie at residues 123–163 (LISK…GNPV) and 182–203 (NGGSQVINKNRVPPGGYSSGLW). The span at 133-146 (SGSVSSASSSVSSS) shows a compositional bias: low complexity. Phosphoserine occurs at positions 135 and 146.

It belongs to the MAP Jupiter family.

The protein localises to the nucleus. The protein resides in the cytoplasm. It localises to the cytoskeleton. Its subcellular location is the spindle. Its function is as follows. Binds to all microtubule populations. The sequence is that of Microtubule-associated protein Jupiter from Drosophila mojavensis (Fruit fly).